The chain runs to 321 residues: Olfactory receptor 5K3 (321 aa).

At 1–25 (MNKENHSLIAEFILTGFTYHPKLKT) the chain is on the extracellular side. The N-linked (GlcNAc...) asparagine glycan is linked to Asn5. Residues 26 to 46 (VLFVVFFAIYLITMVGNIGLV) traverse the membrane as a helical segment. The Cytoplasmic portion of the chain corresponds to 47 to 56 (ALIYIEQRLH). The helical transmembrane segment at 57–77 (TPMYIFLGNLVLMDSCCSSAI) threads the bilayer. The Extracellular segment spans residues 78 to 97 (TPKMLENFFSEDKRITLYEC). Cys97 and Cys179 are oxidised to a cystine. Residues 98 to 118 (MAQFYFLCLAETTDCFLLAAM) traverse the membrane as a helical segment. At 119–143 (AYDCYVAICNPLQYHTMMSKTLCIQ) the chain is on the cytoplasmic side. A helical membrane pass occupies residues 144–164 (MTAGAYLAGNLHPMIEVEFLL). At 165-196 (RLTFCGSHQINHFFCDVLPLYRLSCINPYINE) the chain is on the extracellular side. Residues 197-217 (LVLFILAGSIQIFTIVLVSYF) form a helical membrane-spanning segment. The Cytoplasmic segment spans residues 218–235 (YILFTIFTMKSKEGRGKA). A helical membrane pass occupies residues 236-256 (LSTCASHFLSVSIFCDSLLFM). Residues 257-269 (YARPGAVNEGDKD) lie on the Extracellular side of the membrane. A helical membrane pass occupies residues 270 to 290 (IPVAIFYTLVIPLLNPFIYSL). The Cytoplasmic segment spans residues 291–321 (RNKEVINIMKKIMKKRKFCHILKQMSSPLAT).

The protein belongs to the G-protein coupled receptor 1 family.

The protein resides in the cell membrane. Its function is as follows. Odorant receptor. This Homo sapiens (Human) protein is Olfactory receptor 5K3 (OR5K3).